Consider the following 438-residue polypeptide: Putative F-box/FBD/LRR-repeat protein At5g44950 (438 aa).

The F-box domain occupies 3–49 (RDRISELPDGLLNHILMYLHIEESIRTSVLSSRWRKLWLKVPGLDVN). 2 LRR repeats span residues 246-275 (LSSL…DLTK) and 286-310 (ISSV…KIGQ). In terms of domain architecture, FBD spans 355 to 407 (PEQIDFTNLPRCLISTLEYVEIKQLTMREESGIKLVKYFLENSAVLKKLTLSF).

The sequence is that of Putative F-box/FBD/LRR-repeat protein At5g44950 from Arabidopsis thaliana (Mouse-ear cress).